The sequence spans 554 residues: MDHKILLTPPKSLYTKCIITIIYVVSISHLNAHFITSCKQTPYPSVCDHHMSNSPLKTLDDQTDGFTFHDLVVSSTMDQAVQLHRLVSSLKQHHSLHKHATSALFDCLELYEDTIDQLNHSRRSYGQYSSPHDRQTSLSAAIANQDTCRNGFRDFKLTSSYSKYFPVQFHRNLTKSISNSLAVTKAAAEAEAVAEKYPSTGFTKFSKQRSSAGGGSHRRLLLFSDEKFPSWFPLSDRKLLEDSKTTAKADLVVAKDGSGHYTSIQQAVNAAAKLPRRNQRLVIYVKAGVYRENVVIKKSIKNVMVIGDGIDSTIVTGNRNVQDGTTTFRSATFAVSGNGFIAQGITFENTAGPEKHQAVALRSSSDFSVFYACSFKGYQDTLYLHSSRQFLRNCNIYGTVDFIFGDATAILQNCNIYARKPMSGQKNTITAQSRKEPDETTGFVIQSSTVATASETYLGRPWRSHSRTVFMKCNLGALVSPAGWLPWSGSFALSTLYYGEYGNTGAGASVSGRVKWPGYHVIKTVTEAEKFTVENFLDGNYWITATGVPVNDGL.

An N-terminal signal peptide occupies residues 1–32 (MDHKILLTPPKSLYTKCIITIIYVVSISHLNA). The pectinesterase inhibitor 6 stretch occupies residues 29–183 (HLNAHFITSC…TKSISNSLAV (155 aa)). Residues asparagine 119 and asparagine 172 are each glycosylated (N-linked (GlcNAc...) asparagine). The pectinesterase 6 stretch occupies residues 250–540 (DLVVAKDGSG…FTVENFLDGN (291 aa)). Threonine 327 and glutamine 357 together coordinate substrate. The active-site Proton donor; for pectinesterase activity is aspartate 380. A disulfide bridge connects residues cysteine 394 and cysteine 414. Residue aspartate 401 is the Nucleophile; for pectinesterase activity of the active site. Positions 460 and 462 each coordinate substrate.

The protein in the N-terminal section; belongs to the PMEI family. This sequence in the C-terminal section; belongs to the pectinesterase family. As to expression, expressed in rosette leaves, flower and siliques.

The protein resides in the secreted. It localises to the cell wall. The catalysed reaction is [(1-&gt;4)-alpha-D-galacturonosyl methyl ester](n) + n H2O = [(1-&gt;4)-alpha-D-galacturonosyl](n) + n methanol + n H(+). Its pathway is glycan metabolism; pectin degradation; 2-dehydro-3-deoxy-D-gluconate from pectin: step 1/5. In terms of biological role, acts in the modification of cell walls via demethylesterification of cell wall pectin. The protein is Probable pectinesterase/pectinesterase inhibitor 6 (PME6) of Arabidopsis thaliana (Mouse-ear cress).